The primary structure comprises 881 residues: Armadillo repeat-containing protein 3 (881 aa).

ARM repeat units follow at residues 15–54 (DVFD…KFAL), 57–96 (EENK…ILAS), 98–138 (SDVK…NMSV), 140–179 (YTGK…NLVQ), 181–220 (FQCR…VITC), 222–262 (KEAR…NCLE), 264–304 (MDTM…KAAY), 306–345 (PENR…ALCE), 346–385 (NLSC…NLTT), 388–427 (PANA…NMAT), 429–468 (EPLR…ATAC), and 470–509 (VEAR…VCAG). S-palmitoyl cysteine attachment occurs at residues cysteine 507 and cysteine 518. The tract at residues 605-659 (NNKSDTSPPPSMEDKSSDVGYGRSISSSSSLRRGSKEKANAIFGSPTEEKSEPAS) is disordered. The segment covering 622-636 (DVGYGRSISSSSSLR) has biased composition (low complexity).

As to quaternary structure, homodimer. Interacts with PIK3C3, PIK3R4 and BECN1. Interacts (via ARM domains) with ATG14. Post-translationally, palmitoylation is important for its function in autophagy. Testis-specific.

Its function is as follows. Essential for male fertility and sperm motility. During spermatogenesis, promotes the autophagic degradation of excessive ribosomes, providing energy resources for mitochondria and thus ensuring sperm flagellar motility. The sequence is that of Armadillo repeat-containing protein 3 (Armc3) from Mus musculus (Mouse).